Here is a 249-residue protein sequence, read N- to C-terminus: 1-(5-phosphoribosyl)-5-[(5-phosphoribosylamino)methylideneamino] imidazole-4-carboxamide isomerase (249 aa).

Residue aspartate 8 is the Proton acceptor of the active site. The active-site Proton donor is aspartate 130.

This sequence belongs to the HisA/HisF family.

It is found in the cytoplasm. The catalysed reaction is 1-(5-phospho-beta-D-ribosyl)-5-[(5-phospho-beta-D-ribosylamino)methylideneamino]imidazole-4-carboxamide = 5-[(5-phospho-1-deoxy-D-ribulos-1-ylimino)methylamino]-1-(5-phospho-beta-D-ribosyl)imidazole-4-carboxamide. It participates in amino-acid biosynthesis; L-histidine biosynthesis; L-histidine from 5-phospho-alpha-D-ribose 1-diphosphate: step 4/9. The chain is 1-(5-phosphoribosyl)-5-[(5-phosphoribosylamino)methylideneamino] imidazole-4-carboxamide isomerase from Chromohalobacter salexigens (strain ATCC BAA-138 / DSM 3043 / CIP 106854 / NCIMB 13768 / 1H11).